We begin with the raw amino-acid sequence, 555 residues long: 6-phosphofructo-2-kinase/fructose-2,6-bisphosphatase 3 (555 aa).

The 6-phosphofructo-2-kinase stretch occupies residues 1 to 245 (MPLELTQSRV…VYYLMNIHVQ (245 aa)). 42 to 50 (GLPARGKTY) provides a ligand contact to ATP. Beta-D-fructose 6-phosphate-binding residues include arginine 75 and arginine 99. Aspartate 125 is a catalytic residue. Residues threonine 127 and arginine 133 each coordinate beta-D-fructose 6-phosphate. The active site involves cysteine 155. 164–169 (NIMEVK) is an ATP binding site. Residues lysine 169, arginine 190, and tyrosine 194 each contribute to the beta-D-fructose 6-phosphate site. Positions 246–555 (PRTIYLCRHG…CHIFSKFSPY (310 aa)) are fructose-2,6-bisphosphatase. Beta-D-fructose 2,6-bisphosphate is bound at residue arginine 253. The active-site Tele-phosphohistidine intermediate is histidine 254. Beta-D-fructose 2,6-bisphosphate contacts are provided by asparagine 260 and glycine 266. Catalysis depends on glutamate 323, which acts as the Proton donor/acceptor. The beta-D-fructose 2,6-bisphosphate site is built by tyrosine 334, arginine 348, lysine 352, tyrosine 363, glutamine 389, and arginine 393. 345–348 (YALR) provides a ligand contact to ATP. ATP contacts are provided by residues 389–393 (QAVLR) and tyrosine 425. Residues 475-504 (KQDAKKGPNPLMRRNSVTPLASPEPTKKPR) are disordered. Serine 490 is modified (phosphoserine; by AMPK and PKA). Threonine 492 bears the Phosphothreonine mark. Serine 496 is modified (phosphoserine).

In the C-terminal section; belongs to the phosphoglycerate mutase family. Homodimer. Forms a heterodimer with PFKFB2. Post-translationally, phosphorylation by AMPK stimulates activity.

It carries out the reaction beta-D-fructose 2,6-bisphosphate + H2O = beta-D-fructose 6-phosphate + phosphate. It catalyses the reaction beta-D-fructose 6-phosphate + ATP = beta-D-fructose 2,6-bisphosphate + ADP + H(+). Functionally, catalyzes both the synthesis and degradation of fructose 2,6-bisphosphate. This is 6-phosphofructo-2-kinase/fructose-2,6-bisphosphatase 3 (Pfkfb3) from Rattus norvegicus (Rat).